We begin with the raw amino-acid sequence, 320 residues long: uncharacterized protein (320 aa).

7 helical membrane-spanning segments follow: residues Phe-24 to Ile-44, Phe-65 to Leu-85, Thr-105 to Val-125, Ser-132 to Leu-152, Ile-179 to Phe-199, Met-226 to Tyr-246, and Thr-253 to Leu-275.

It is found in the membrane. This is an uncharacterized protein from Caenorhabditis elegans.